The primary structure comprises 137 residues: ATP synthase epsilon chain (137 aa).

Belongs to the ATPase epsilon chain family. In terms of assembly, F-type ATPases have 2 components, CF(1) - the catalytic core - and CF(0) - the membrane proton channel. CF(1) has five subunits: alpha(3), beta(3), gamma(1), delta(1), epsilon(1). CF(0) has three main subunits: a, b and c.

It localises to the cell membrane. Produces ATP from ADP in the presence of a proton gradient across the membrane. In Caldicellulosiruptor bescii (strain ATCC BAA-1888 / DSM 6725 / KCTC 15123 / Z-1320) (Anaerocellum thermophilum), this protein is ATP synthase epsilon chain.